The chain runs to 385 residues: ATP phosphoribosyltransferase regulatory subunit (385 aa).

Belongs to the class-II aminoacyl-tRNA synthetase family. HisZ subfamily. In terms of assembly, heteromultimer composed of HisG and HisZ subunits.

The protein resides in the cytoplasm. It participates in amino-acid biosynthesis; L-histidine biosynthesis; L-histidine from 5-phospho-alpha-D-ribose 1-diphosphate: step 1/9. Required for the first step of histidine biosynthesis. May allow the feedback regulation of ATP phosphoribosyltransferase activity by histidine. The polypeptide is ATP phosphoribosyltransferase regulatory subunit (Bordetella avium (strain 197N)).